We begin with the raw amino-acid sequence, 214 residues long: MPMSAIDKEALETWVPRTRVGKMVVEGKITSLKEIFDRNLPLLEPEIVDYLLPDLKYERLDVGIVQKVTDAGRRSRFRVVVVVGNEDGFVGVGSGKARQYLVALRKALRNAKLNITPVRRGCGSWECRCGEPHSIPFTVQGKSGSVVVVLKPAPKGTGLVAGDTAKAVLRMAGIKDVWTETFGKTKTTLNFAKAVVNALRNTYKFVAPVDWLKA.

Residues 55-118 (LKYERLDVGI…RNAKLNITPV (64 aa)) enclose the S5 DRBM domain.

The protein belongs to the universal ribosomal protein uS5 family. Part of the 30S ribosomal subunit. Contacts protein S4.

With S4 and S12 plays an important role in translational accuracy. The polypeptide is Small ribosomal subunit protein uS5 (Staphylothermus marinus (strain ATCC 43588 / DSM 3639 / JCM 9404 / F1)).